A 775-amino-acid polypeptide reads, in one-letter code: Coiled-coil domain-containing protein 33 (775 aa).

Disordered regions lie at residues 1–23 (MGRQKTKVPEEPQDRLDTSLDPY) and 68–87 (EANNHSPQARTSVTSEPTRA). Over residues 7 to 18 (KVPEEPQDRLDT) the composition is skewed to basic and acidic residues. Positions 12–141 (PQDRLDTSLD…RAFHPYHFEL (130 aa)) constitute a C2 domain. Polar residues predominate over residues 71 to 84 (NHSPQARTSVTSEP). Coiled-coil stretches lie at residues 414 to 561 (VEMN…ERKE) and 672 to 715 (DKFS…LQEQ). The disordered stretch occupies residues 735–775 (RSQGSTTPRQNLKDEGYPGNIERPLQTHLTPGTRDIRHHLR).

In Rattus norvegicus (Rat), this protein is Coiled-coil domain-containing protein 33 (Ccdc33).